Consider the following 228-residue polypeptide: 5'(3')-deoxyribonucleotidase, mitochondrial (228 aa).

The transit peptide at 1–31 (MIRLGGWCARRLCSAAVPAGRRGAAGGLGLA) directs the protein to the mitochondrion. Catalysis depends on aspartate 41, which acts as the Nucleophile. Positions 41 and 43 each coordinate Mg(2+). The active-site Proton donor is the aspartate 43. 8 residues coordinate substrate: aspartate 43, phenylalanine 49, phenylalanine 75, tryptophan 76, valine 77, tryptophan 96, threonine 130, and lysine 165. Position 176 (aspartate 176) interacts with Mg(2+).

This sequence belongs to the 5'(3')-deoxyribonucleotidase family. Homodimer. It depends on Mg(2+) as a cofactor. Highly expressed in heart, brain and skeletal muscle. Detected at very low levels in kidney and pancreas.

Its subcellular location is the mitochondrion. Functionally, dephosphorylates specifically the 5' and 2'(3')-phosphates of uracil and thymine deoxyribonucleotides, and so protects mitochondrial DNA replication from excess dTTP. Has only marginal activity towards dIMP and dGMP. In Homo sapiens (Human), this protein is 5'(3')-deoxyribonucleotidase, mitochondrial (NT5M).